Here is a 752-residue protein sequence, read N- to C-terminus: Probable GTP-binding protein OBGC1, chloroplastic (752 aa).

Residues 1–90 (MAPAVAVVAA…RFPTANPEPR (90 aa)) constitute a chloroplast transit peptide. Residues 19 to 121 (FSAEARRNTK…EEDEVELGLR (103 aa)) form a disordered region. Residues 26–36 (NTKGSRSKRGS) show a composition bias toward basic residues. Over residues 103 to 117 (GDDEEDEEEEEDEVE) the composition is skewed to acidic residues. The region spanning 294-452 (MRCFDTAKIY…MWIDLELKLV (159 aa)) is the Obg domain. The 169-residue stretch at 453–621 (ADVGIVGAPN…VVLAAYKVLQ (169 aa)) folds into the OBG-type G domain. GTP-binding positions include 459 to 466 (GAPNAGKS), 484 to 488 (FTTLL), 506 to 509 (DLPG), 573 to 576 (NKMD), and 602 to 604 (SAM). Residues Ser-466 and Thr-486 each contribute to the Mg(2+) site. The region spanning 649 to 728 (ERRAPMNEFE…VGEMEMVWTD (80 aa)) is the OCT domain. The interval 728 to 752 (DEPSKTRSSKTMNSKDDSVRWPEFG) is disordered. Over residues 740-752 (NSKDDSVRWPEFG) the composition is skewed to basic and acidic residues.

The protein belongs to the TRAFAC class OBG-HflX-like GTPase superfamily. OBG GTPase family. Mg(2+) is required as a cofactor.

The protein localises to the plastid. The protein resides in the chloroplast. Functionally, probable GTP-binding protein that may play a role in chloroplast development. This Oryza sativa subsp. indica (Rice) protein is Probable GTP-binding protein OBGC1, chloroplastic (OBGC1).